A 365-amino-acid polypeptide reads, in one-letter code: uncharacterized protein (365 aa).

A run of 3 helical transmembrane segments spans residues 105–125 (TGNW…QCWL), 151–171 (ILTT…SLTI), and 187–207 (IFLI…SLIF).

It is found in the cell membrane. This is an uncharacterized protein from Mycoplasma genitalium (strain ATCC 33530 / DSM 19775 / NCTC 10195 / G37) (Mycoplasmoides genitalium).